Here is a 100-residue protein sequence, read N- to C-terminus: Large ribosomal subunit protein uL23 (100 aa).

Belongs to the universal ribosomal protein uL23 family. Part of the 50S ribosomal subunit. Contacts protein L29, and trigger factor when it is bound to the ribosome.

Functionally, one of the early assembly proteins it binds 23S rRNA. One of the proteins that surrounds the polypeptide exit tunnel on the outside of the ribosome. Forms the main docking site for trigger factor binding to the ribosome. This Kosmotoga olearia (strain ATCC BAA-1733 / DSM 21960 / TBF 19.5.1) protein is Large ribosomal subunit protein uL23.